The chain runs to 726 residues: Replication restart protein PriA (726 aa).

Residue I234 coordinates ATP. One can recognise a Helicase ATP-binding domain in the interval 234-373 (IQSVLYKGVQ…LHRKCFYIKL (140 aa)). The DEAH box motif lies at 316-319 (LEEH). Positions 431, 434, 440, 443, 458, 461, 471, and 474 each coordinate Zn(2+).

The protein belongs to the helicase family. PriA subfamily. Component of the replication restart primosome. The cofactor is Zn(2+).

The catalysed reaction is Couples ATP hydrolysis with the unwinding of duplex DNA by translocating in the 3'-5' direction.. It carries out the reaction ATP + H2O = ADP + phosphate + H(+). Functionally, initiates the restart of stalled replication forks, which reloads the replicative helicase on sites other than the origin of replication. Recognizes and binds to abandoned replication forks and remodels them to uncover a helicase loading site. Promotes assembly of the primosome at these replication forks. This is Replication restart protein PriA from Buchnera aphidicola subsp. Acyrthosiphon pisum (strain APS) (Acyrthosiphon pisum symbiotic bacterium).